We begin with the raw amino-acid sequence, 436 residues long: Xylose isomerase (436 aa).

The Mg(2+) site is built by Asp306 and Asp308.

This sequence belongs to the xylose isomerase family. In terms of assembly, homotetramer. The cofactor is Mg(2+).

Its subcellular location is the cytoplasm. It carries out the reaction alpha-D-xylose = alpha-D-xylulofuranose. This Rhizobium rhizogenes (strain K84 / ATCC BAA-868) (Agrobacterium radiobacter) protein is Xylose isomerase.